Here is a 402-residue protein sequence, read N- to C-terminus: Indole-3-glycerol phosphate synthase, chloroplastic (402 aa).

The transit peptide at 1–65 (MEGLVPVQRL…SDLKESLAVS (65 aa)) directs the protein to the chloroplast.

Belongs to the TrpC family. In terms of tissue distribution, expressed in leaves.

It is found in the plastid. The protein localises to the chloroplast. It catalyses the reaction 1-(2-carboxyphenylamino)-1-deoxy-D-ribulose 5-phosphate + H(+) = (1S,2R)-1-C-(indol-3-yl)glycerol 3-phosphate + CO2 + H2O. It participates in amino-acid biosynthesis; L-tryptophan biosynthesis; L-tryptophan from chorismate: step 4/5. Indole-3-glycerol phosphate synthase required for tryptophan biosynthesis. The chain is Indole-3-glycerol phosphate synthase, chloroplastic from Arabidopsis thaliana (Mouse-ear cress).